Here is a 245-residue protein sequence, read N- to C-terminus: NAD-dependent protein deacetylase (245 aa).

One can recognise a Deacetylase sirtuin-type domain in the interval Met-1–Lys-245. NAD(+)-binding residues include Ala-26, Thr-30, Phe-37, Arg-38, Gln-105, Ile-107, Asp-108, and His-123. Phe-37 is a nicotinamide binding site. Nicotinamide contacts are provided by Ile-107 and Asp-108. The Proton acceptor role is filled by His-123. Residues Cys-131, Cys-134, Cys-151, and Cys-154 each coordinate Zn(2+). Thr-190, Ser-191, Asn-216, and Ile-234 together coordinate NAD(+).

Belongs to the sirtuin family. Class U subfamily. Zn(2+) serves as cofactor.

It localises to the cytoplasm. The enzyme catalyses N(6)-acetyl-L-lysyl-[protein] + NAD(+) + H2O = 2''-O-acetyl-ADP-D-ribose + nicotinamide + L-lysyl-[protein]. In terms of biological role, NAD-dependent protein deacetylase which modulates the activities of several enzymes which are inactive in their acetylated form. This chain is NAD-dependent protein deacetylase, found in Bacillus cereus (strain ZK / E33L).